Here is a 119-residue protein sequence, read N- to C-terminus: Ribonuclease P protein component (119 aa).

Belongs to the RnpA family. In terms of assembly, consists of a catalytic RNA component (M1 or rnpB) and a protein subunit.

The enzyme catalyses Endonucleolytic cleavage of RNA, removing 5'-extranucleotides from tRNA precursor.. Functionally, RNaseP catalyzes the removal of the 5'-leader sequence from pre-tRNA to produce the mature 5'-terminus. It can also cleave other RNA substrates such as 4.5S RNA. The protein component plays an auxiliary but essential role in vivo by binding to the 5'-leader sequence and broadening the substrate specificity of the ribozyme. This chain is Ribonuclease P protein component, found in Mycobacterium avium (strain 104).